The following is a 279-amino-acid chain: Tryptophan 2,3-dioxygenase (279 aa).

Substrate is bound by residues 48-52 (FIIQH), Y110, and R114. H237 lines the heme pocket. T251 contributes to the substrate binding site.

Belongs to the tryptophan 2,3-dioxygenase family. As to quaternary structure, homotetramer. Heme serves as cofactor.

It carries out the reaction L-tryptophan + O2 = N-formyl-L-kynurenine. It participates in amino-acid degradation; L-tryptophan degradation via kynurenine pathway; L-kynurenine from L-tryptophan: step 1/2. Functionally, heme-dependent dioxygenase that catalyzes the oxidative cleavage of the L-tryptophan (L-Trp) pyrrole ring and converts L-tryptophan to N-formyl-L-kynurenine. Catalyzes the oxidative cleavage of the indole moiety. This is Tryptophan 2,3-dioxygenase from Bradyrhizobium sp. (strain ORS 278).